A 956-amino-acid chain; its full sequence is Zinc fingers and homeoboxes protein 3 (956 aa).

Residues 1 to 107 are required for nuclear localization; the sequence is MASKRKSTTP…SEHTDFNKDP (107 aa). Residues 22–66 are disordered; it reads DASMEAQPAETLPEGPQQDLPPEASAASSEAAQNPSSTDGSTLAN. The span at 42–58 shows a compositional bias: low complexity; sequence PPEASAASSEAAQNPSS. 2 C2H2-type zinc fingers span residues 77–100 and 109–132; these read YSCK…NSEH and FVCS…ATCH. The required for homodimerization and interaction with NFYA stretch occupies residues 242-488; sequence ASASSAKNPH…LLTACPSITS (247 aa). Residues 303–502 are required for repressor activity; the sequence is LSSIPTYNAA…DASIYKNKKS (200 aa). DNA-binding regions (homeobox) lie at residues 304–363 and 494–553; these read SSIP…GISW and ASIY…RNLK. The tract at residues 497–555 is required for nuclear localization; it reads YKNKKSHEQLSALKGSFCRNQFPGQSEVEHLTKVTGLSTREVRKWFSDRRYHCRNLKGS. Disordered stretches follow at residues 598-618 and 666-695; these read PSAK…KYKE and KVNA…GEED. Phosphoserine is present on residues Ser599 and Ser604. Residues 612–671 constitute a DNA-binding region (homeobox 3); sequence TPTKYKERAPEQLRALESSFAQNPLPLDEELDRLRSETKMTRREIDSWFSERRKKVNAEE. The span at 666–677 shows a compositional bias: basic and acidic residues; that stretch reads KVNAEETKKAEE. Over residues 679–695 the composition is skewed to acidic residues; that stretch reads ASQEEEEAAEDEGGEED. Ser680, Ser708, and Ser723 each carry phosphoserine. 2 consecutive DNA-binding regions (homeobox) follow at residues 764 to 823 and 835 to 894; these read PGKV…KNGQ and FPPG…TRAV. Residues 890 to 956 form a disordered region; that stretch reads ETRAVADTGS…PQAGRQLETD (67 aa). Phosphoserine is present on residues Ser927 and Ser946.

It belongs to the ZHX family. In terms of assembly, homodimer (via homeobox domain 1). Heterodimer with ZHX1 (via homeobox domain 1). Heterodimer with ZHX2 (via homeobox domain 1). Heterodimerization with ZHX1 is a prerequisite for repressor activity. Interacts with NFYA. As to expression, widely expressed. High expression in kidney. Expressed during osteogenic differentiation.

The protein localises to the nucleus. Functionally, acts as a transcriptional repressor. Involved in the early stages of mesenchymal stem cell (MSC) osteogenic differentiation. Is a regulator of podocyte gene expression during primary glomerula disease. Binds to promoter DNA. The protein is Zinc fingers and homeoboxes protein 3 (ZHX3) of Homo sapiens (Human).